Reading from the N-terminus, the 1053-residue chain is Phosphoenolpyruvate carboxylase (1053 aa).

H246 is a catalytic residue. Basic and acidic residues predominate over residues 461 to 473 (RNTRLQQQQEKDP). Residues 461–480 (RNTRLQQQQEKDPTTPLPEY) form a disordered region. Residue K699 is part of the active site.

This sequence belongs to the PEPCase type 1 family. It depends on Mg(2+) as a cofactor.

The catalysed reaction is oxaloacetate + phosphate = phosphoenolpyruvate + hydrogencarbonate. Functionally, forms oxaloacetate, a four-carbon dicarboxylic acid source for the tricarboxylic acid cycle. This is Phosphoenolpyruvate carboxylase (ppc) from Synechococcus sp. (strain ATCC 27144 / PCC 6301 / SAUG 1402/1) (Anacystis nidulans).